The following is a 280-amino-acid chain: 2-dehydro-3-deoxyphosphooctonate aldolase (280 aa).

The protein belongs to the KdsA family.

The protein resides in the cytoplasm. The enzyme catalyses D-arabinose 5-phosphate + phosphoenolpyruvate + H2O = 3-deoxy-alpha-D-manno-2-octulosonate-8-phosphate + phosphate. It participates in carbohydrate biosynthesis; 3-deoxy-D-manno-octulosonate biosynthesis; 3-deoxy-D-manno-octulosonate from D-ribulose 5-phosphate: step 2/3. The protein operates within bacterial outer membrane biogenesis; lipopolysaccharide biosynthesis. In Neisseria meningitidis serogroup A / serotype 4A (strain DSM 15465 / Z2491), this protein is 2-dehydro-3-deoxyphosphooctonate aldolase.